The sequence spans 112 residues: Peptidyl-tRNA hydrolase (112 aa).

The interval 64–99 is disordered; it reads EEAKRAGLPTGLISDAGRTQLEPGTPTALAIGPAPD.

The protein belongs to the PTH2 family.

It localises to the cytoplasm. The catalysed reaction is an N-acyl-L-alpha-aminoacyl-tRNA + H2O = an N-acyl-L-amino acid + a tRNA + H(+). Its function is as follows. The natural substrate for this enzyme may be peptidyl-tRNAs which drop off the ribosome during protein synthesis. The sequence is that of Peptidyl-tRNA hydrolase from Halobacterium salinarum (strain ATCC 29341 / DSM 671 / R1).